Here is a 1127-residue protein sequence, read N- to C-terminus: MGVPALFRWLSKKYPKIVERVKEDTPKKIRGPDGEIVEEPIRYENPNPNGFEVDNLYLDMNGIVHPCTHPEGRPAPETEEEMMVEIFKYTERVVNMCRPRKVLMMAIDGVAPRAKMNQQRSRRFRAAQEAADKEEERREAIKLFEAMGHAVSEETANHKSWDTNAITPGTPFMDLLSISLKYWVSHKLTTDPGWKDLKIILSDSSVPGEGEHKIMDWIRRQRSYPTWDANTSHVIYGLDADLIMLSLATHEPHFRVLREDVFAQSSKGPHACKNCGKVGHIAANCKSDKKFKDPNVAEVAKTEDPKPFIFLDVACLREYLAVELVVPGMPFPFDLELAIDDWIFMIFFVGNDFLPHLPSLEIREGAIDVLLKIWRAELPRMGGYLTNHGKVNLDRAQVILEGLAKSEDEIFQKRKDDEERQEHSQKRRRIEEHKRQDEDKAREEDRNTLTLNGTEYVAVDNPAATARGGPLHPSLPSRPAFDLVPKEDAVKQPEDQDQKAKKAMAGSNSDIVKNRKAIRMANMSAAQALKAELEGGNDVNVDDKKAIAQEGKEEDEAVVTVERTEDEEKEQLTKEEARGTLEEQGEKEGVDEEVVPPAIQTDEDEGEAPVGDATVAENDESTTPEDDEDPTHVPRKRKRGDSDGDEDSNEEDDDDDDDDAPPNPEADQPIPKKKLKVNADGTVDYEDDVKLWEPGYRERYYEKKFGVKLSEREFIDKVTKSYMEGLCWVLEYYYQGVPAWDWFYPYHYAPFAQDFRDVGSMDIKFETSIPFKPFAQLLGVFPAASRIHLPEPLQTLMIDEDSPILDFYPPDFEIDMNGKKMAWQGVALLPFIDQNRLLTALKSKEELLSDDEKRRNSWGDNVMFIANENPLYDLFCDKLYGLRAKDPIPIDTKASYGITGSVLPDPNCVPASTFDTPIPSISECPDLNPNDSISVRYYFPRQAHPHRSILLRGYKPEPARLTESDKDWVRRGGQGGRRGHRHNGGGNGNVTGGPGMARGRYESGPPRTNGYQPPPPRSNYGGSSGYGYGAPAPLPSRPPVSSYGGGAGGYGYSNPYAAAPNPYAGGYGAPAPYAAGGYGQRPYVPPLPPPNPYSAPPPAYGRPPGGGYGYGAPPPRGGGYNPYPSRR.

Residues 121–147 (SRRFRAAQEAADKEEERREAIKLFEAM) adopt a coiled-coil conformation. The CCHC-type zinc-finger motif lies at 270–287 (HACKNCGKVGHIAANCKS). 3 stretches are compositionally biased toward basic and acidic residues: residues 411 to 447 (FQKR…EDRN), 541 to 551 (VDDKKAIAQEG), and 570 to 588 (EQLT…GEKE). 4 disordered regions span residues 411–448 (FQKR…DRNT), 532–678 (ELEG…LKVN), 962–1033 (TESD…APAP), and 1069–1127 (APAP…PSRR). Positions 412 to 441 (QKRKDDEERQEHSQKRRRIEEHKRQDEDKA) form a coiled coil. Acidic residues-rich tracts occupy residues 617 to 629 (ENDE…DDED) and 643 to 660 (DGDE…DDDA). Residues 984–996 (GGGNGNVTGGPGM) are compositionally biased toward gly residues. A compositionally biased stretch (pro residues) spans 1083-1101 (YVPPLPPPNPYSAPPPAYG).

This sequence belongs to the 5'-3' exonuclease family. XRN2/RAT1 subfamily. Interacts with RAI1; the interaction is direct, stabilizes RAT1 protein structure and may stimulate its exoribonuclease activity. The interaction also stimulates RAI1 pyrophosphohydrolase activity, probably by recruiting it to mRNA substrates.

Its subcellular location is the nucleus. Its function is as follows. Possesses 5'-&gt;3' exoribonuclease activity. Required for the processing of nuclear mRNA and rRNA precursors. May promote the termination of transcription by RNA polymerase II. Essential for vegetative cell growth and chromosome segregation. The polypeptide is 5'-3' exoribonuclease 2 (RAT1) (Cryptococcus neoformans var. neoformans serotype D (strain JEC21 / ATCC MYA-565) (Filobasidiella neoformans)).